The sequence spans 56 residues: Large ribosomal subunit protein bL32 (56 aa).

Over residues 1 to 16 the composition is skewed to basic residues; sequence MAVQKSKKSRSRRDMR. Residues 1 to 56 form a disordered region; the sequence is MAVQKSKKSRSRRDMRRSHDAIDGPTLSVDSTTGETHRRHHVTADGYYKGRKVVNK.

Belongs to the bacterial ribosomal protein bL32 family.

The protein is Large ribosomal subunit protein bL32 of Idiomarina loihiensis (strain ATCC BAA-735 / DSM 15497 / L2-TR).